A 179-amino-acid chain; its full sequence is Fas apoptotic inhibitory molecule 1 (179 aa).

The residue at position 2 (Thr-2) is an N-acetylthreonine.

This sequence belongs to the FAIM1 family. Widely expressed, with the highest levels in brain, thymus, kidney, and spleen.

It is found in the cytoplasm. In terms of biological role, plays a role as an inducible effector molecule that mediates Fas resistance produced by surface Ig engagement in B cells. This chain is Fas apoptotic inhibitory molecule 1 (Faim), found in Mus musculus (Mouse).